The sequence spans 315 residues: Malate dehydrogenase (315 aa).

NAD(+)-binding positions include 11–16 (GAGHVG) and Asp-35. The substrate site is built by Arg-84 and Arg-90. NAD(+) contacts are provided by residues Asn-97 and 120-122 (VTN). Substrate-binding residues include Asn-122 and Arg-153. The active-site Proton acceptor is His-177.

It belongs to the LDH/MDH superfamily. MDH type 3 family.

The catalysed reaction is (S)-malate + NAD(+) = oxaloacetate + NADH + H(+). Its function is as follows. Catalyzes the reversible oxidation of malate to oxaloacetate. The polypeptide is Malate dehydrogenase (Thermosulfidibacter takaii (strain DSM 17441 / JCM 13301 / NBRC 103674 / ABI70S6)).